The chain runs to 208 residues: T-cell surface glycoprotein CD8 beta chain (208 aa).

The N-terminal stretch at 1-21 (MQPWLWLVFSVKLSALWGSSA) is a signal peptide. In terms of domain architecture, Ig-like V-type spans 22–131 (LLQTPSSLLV…MVVFGTGTKL (110 aa)). The Extracellular portion of the chain corresponds to 22-168 (LLQTPSSLLV…KTQKGLTCGL (147 aa)). 3 N-linked (GlcNAc...) asparagine glycosylation sites follow: Asn-34, Asn-88, and Asn-94. Cys-41 and Cys-115 are disulfide-bonded. The chain crosses the membrane as a helical span at residues 169–189 (ITLSLLVACILVLLVSLSVAI). At 190–208 (HFHCMRRRARIHFMKQFHK) the chain is on the cytoplasmic side.

In terms of assembly, forms disulfide-linked heterodimers with CD8A at the cell surface. Interacts with CD3D; this interaction couples TCR-CD3 with CD8. Interacts with LCK. In terms of processing, phosphorylated as a consequence of T-cell activation. Palmitoylated at the cytoplasmic tail and thereby targets the heterodimer CD8A/CD8B to lipid rafts unlike CD8A homodimers.

The protein resides in the cell membrane. Functionally, integral membrane glycoprotein that plays an essential role in the immune response and serves multiple functions in responses against both external and internal offenses. In T-cells, functions primarily as a coreceptor for MHC class I molecule:peptide complex. The antigens presented by class I peptides are derived from cytosolic proteins while class II derived from extracellular proteins. Interacts simultaneously with the T-cell receptor (TCR) and the MHC class I proteins presented by antigen presenting cells (APCs). In turn, recruits the Src kinase LCK to the vicinity of the TCR-CD3 complex. A palmitoylation site in the cytoplasmic tail of CD8B chain contributes to partitioning of CD8 into the plasma membrane lipid rafts where signaling proteins are enriched. Once LCK recruited, it initiates different intracellular signaling pathways by phosphorylating various substrates ultimately leading to lymphokine production, motility, adhesion and activation of cytotoxic T-lymphocytes (CTLs). Additionally, plays a critical role in thymic selection of CD8+ T-cells. The protein is T-cell surface glycoprotein CD8 beta chain (Cd8b) of Rattus norvegicus (Rat).